The chain runs to 503 residues: MRAKVKILKIKTGSFNVFISPRDAEEWKLHPNDLVKIESGKRSIYASVAIGDFIEDGEVGLSQDILSSYQFSEGEVVSITPSGTPESVKYIKKKMKGEKLRKVEIETIIRDIVDRKLRNTEISAFITAIEINGLSMDEIAALTIAMAETGDMLDIDRKPIMDVHSIGGVPGNKTNILVVPIVAAAGLTIPKTSSRAITSAAGTADVVEVLTNVKLSLDEIKRIVEKIGACLVWGGALNLAPADDLTIHVERRLSLDPRGLMLASIMSKKYAIGSQYILIDIPTGKGAKVETMDEARTLAKDFIELGKKLGQYVEVAITYGGQPIGYAIGPALEAKEALETLMTGKGPGSLVEKATGLAGILLEMGGVAPKGMGKKVAKEILESGKAYEKMKEIIEEQGGDPNIKPEDIPIGDKTYTIHAQTGGYVTGIDNRAITAIAREAGAPEDKGAGVRLHVKVGEKVKEGDPLITIHAESESRLEKAIVLARRLEPIKIEGMVLQVIGNI.

AMP-binding positions include Gly-168, 194–199, and Thr-203; that span reads SRAITS. The active-site Proton donor is Asp-256. Positions 264 and 288 each coordinate AMP.

It belongs to the thymidine/pyrimidine-nucleoside phosphorylase family. Type 2 subfamily.

The enzyme catalyses AMP + phosphate = alpha-D-ribose 1,5-bisphosphate + adenine. It catalyses the reaction CMP + phosphate = cytosine + alpha-D-ribose 1,5-bisphosphate. It carries out the reaction UMP + phosphate = alpha-D-ribose 1,5-bisphosphate + uracil. Functionally, catalyzes the conversion of AMP and phosphate to adenine and ribose 1,5-bisphosphate (R15P). Exhibits phosphorylase activity toward CMP and UMP in addition to AMP. Functions in an archaeal AMP degradation pathway, together with R15P isomerase and RubisCO. The chain is AMP phosphorylase from Pyrococcus horikoshii (strain ATCC 700860 / DSM 12428 / JCM 9974 / NBRC 100139 / OT-3).